The sequence spans 645 residues: Cysteine-rich receptor-like protein kinase 10 (645 aa).

The first 27 residues, 1-27, serve as a signal peptide directing secretion; the sequence is MSMACYYLAAAAAGLALLLLHAPLTDA. 2 consecutive Gnk2-homologous domains span residues 28–132 and 140–251; these read QTLV…NDAF and SQGM…VYPF. The Extracellular portion of the chain corresponds to 28-283; the sequence is QTLVPLCGDS…AGERSKNKRS (256 aa). N-linked (GlcNAc...) asparagine glycosylation is found at Asn39 and Asn91. Intrachain disulfides connect Cys86/Cys95 and Cys98/Cys123. N-linked (GlcNAc...) asparagine glycosylation is found at Asn151 and Asn169. 2 cysteine pairs are disulfide-bonded: Cys204/Cys213 and Cys216/Cys242. Residues 284 to 304 form a helical membrane-spanning segment; sequence AILAISMPTIALVLATIAAWF. The Cytoplasmic segment spans residues 305–645; that stretch reads CSTSWRRRRL…WVQEIGATAS (341 aa). The region spanning 348–619 is the Protein kinase domain; the sequence is FSEHKRLGEG…PLMSAVNAML (272 aa). ATP contacts are provided by residues 354 to 362 and Lys376; that span reads LGEGGFGVV. Residue Asp473 is the Proton acceptor of the active site.

The protein belongs to the protein kinase superfamily. Ser/Thr protein kinase family. CRK subfamily.

It is found in the membrane. In terms of biological role, involved in disease resistance. Required for NPR1/NH1-mediated immunity to the bacterial blight pathogen Xanthomomas oryzae pv. oryzae (Xoo). Required for the benzothiadiazole (BTH)-induced immune response. Probably regulated by the transcription factor TGA2.1. This chain is Cysteine-rich receptor-like protein kinase 10, found in Oryza sativa subsp. japonica (Rice).